Here is a 728-residue protein sequence, read N- to C-terminus: Beta-porphyranase A (728 aa).

The N-terminal stretch at 1–22 (MSYKYIFLLSAFTLGVPPGIYC) is a signal peptide. Substrate is bound by residues histidine 53, lysine 76, tryptophan 78, lysine 87, histidine 114, and asparagine 151. Residue glutamate 152 is the Proton donor of the active site. Substrate contacts are provided by histidine 235, glutamate 279, serine 326, and tryptophan 331. The active-site Nucleophile is glutamate 279. The region spanning 599–701 (TLQNGTFSEG…AVSFDFNSTV (103 aa)) is the CBM-cenC domain.

This sequence belongs to the glycosyl hydrolase 86 family.

It catalyses the reaction Hydrolysis of beta-D-galactopyranose-(1-&gt;4)-alpha-L-galactopyranose-6-sulfate linkages in porphyran.. In terms of biological role, cleaves the sulfated polysaccharide porphyran at the (1-&gt;4) linkages between beta-D-galactopyranose and alpha-L-galactopyranose-6-sulfate, forming mostly the disaccharide alpha-L-galactopyranose-6-sulfate-(1-&gt;3)-beta-D-galactose. Some longer oligosaccharides of even number of residues are also observed. Inactive on the non-sulfated agarose portion of the porphyran backbone. Can also use methylated galactoses. The sequence is that of Beta-porphyranase A from Phocaeicola plebeius (strain DSM 17135 / JCM 12973 / CCUG 54634 / M2) (Bacteroides plebeius).